We begin with the raw amino-acid sequence, 585 residues long: Cytoplasmic polyadenylation element-binding protein 1 (585 aa).

Positions Met-1–Ser-32 are disordered. RRM domains are found at residues Arg-251–Leu-356 and Arg-373–Thr-444. A disordered region spans residues Asp-513–Arg-533. Basic residues predominate over residues Pro-521–Gln-532.

As to quaternary structure, interacts with fbf-1.

Functionally, cytoplasmic polyadenylation element binding protein that binds to and regulates the translation of specific mRNAs. Essential for progression through meiosis. Involved in spermatogenesis. This chain is Cytoplasmic polyadenylation element-binding protein 1 (cpb-1), found in Caenorhabditis briggsae.